Consider the following 216-residue polypeptide: Protein-L-isoaspartate O-methyltransferase (216 aa).

Ser-66 is an active-site residue.

The protein belongs to the methyltransferase superfamily. L-isoaspartyl/D-aspartyl protein methyltransferase family.

It localises to the cytoplasm. The enzyme catalyses [protein]-L-isoaspartate + S-adenosyl-L-methionine = [protein]-L-isoaspartate alpha-methyl ester + S-adenosyl-L-homocysteine. In terms of biological role, catalyzes the methyl esterification of L-isoaspartyl residues in peptides and proteins that result from spontaneous decomposition of normal L-aspartyl and L-asparaginyl residues. It plays a role in the repair and/or degradation of damaged proteins. This Colwellia psychrerythraea (strain 34H / ATCC BAA-681) (Vibrio psychroerythus) protein is Protein-L-isoaspartate O-methyltransferase.